We begin with the raw amino-acid sequence, 343 residues long: Tryptophan--tRNA ligase (343 aa).

Residues 15–17 (QPT) and 24–25 (GN) each bind ATP. Residues 16–25 (PTSDSLHLGN) carry the 'HIGH' region motif. Aspartate 145 contributes to the L-tryptophan binding site. Residues 157-159 (GED), isoleucine 196, and 205-209 (KMSKS) each bind ATP. Residues 205–209 (KMSKS) carry the 'KMSKS' region motif.

This sequence belongs to the class-I aminoacyl-tRNA synthetase family. In terms of assembly, homodimer.

The protein resides in the cytoplasm. The catalysed reaction is tRNA(Trp) + L-tryptophan + ATP = L-tryptophyl-tRNA(Trp) + AMP + diphosphate + H(+). Its function is as follows. Catalyzes the attachment of tryptophan to tRNA(Trp). This Mycobacterium leprae (strain TN) protein is Tryptophan--tRNA ligase.